We begin with the raw amino-acid sequence, 314 residues long: Thioredoxin reductase aclD (314 aa).

FAD-binding positions include 13-16 (GGPA), 35-40 (DSKSYR), H47, and A112. A disulfide bridge connects residues C136 and C139. Residues D281 and 288–289 (AA) contribute to the FAD site.

This sequence belongs to the class-II pyridine nucleotide-disulfide oxidoreductase family. As to quaternary structure, homodimer. FAD serves as cofactor.

The protein operates within mycotoxin biosynthesis. Its function is as follows. Thioredoxin reductase; part of the gene cluster that mediates the biosynthesis of aspirochlorine (or antibiotic A30641), an unusual halogenated spiro compound with distinctive antifungal properties due to selective inhibition of protein biosynthesis, and which is also active against bacteria, viruses, and murine tumor cells. The non-ribosomal peptide synthetase (NRPS) aclP is responsible the formation of the diketopiperazine (DKP) core from the condensation of 2 phenylalanine residues. One Phe residue is tailored into chlorotyrosine by hydroxylation and chlorination, whereas the second Phe undergoes an unprecedented C-C bond cleavage to be converted into glycine. After formation of the DKP, sulfur is incorporated into the DKP by conjugation with glutathione by aclG, followed by its stepwise degradation to the thiol by aclI, aclJ and aclK, and the dithiol oxidation by aclT. In addition, oxygenases (aclB, aclC, aclL and aclO) and O-methyltransferases (aclM and aclU) act as tailoring enzymes to produce the intermediate dechloroaspirochlorine. Ultimately, chlorination of dechloroaspirochlorine by the halogenase aclH is the last step in the aspirochlorine pathway. The sequence is that of Thioredoxin reductase aclD from Aspergillus oryzae (strain ATCC 42149 / RIB 40) (Yellow koji mold).